Here is a 263-residue protein sequence, read N- to C-terminus: Small ribosomal subunit protein eS4, Y isoform 1 (263 aa).

Positions L42 to D104 constitute an S4 RNA-binding domain.

Belongs to the eukaryotic ribosomal protein eS4 family.

The chain is Small ribosomal subunit protein eS4, Y isoform 1 (RPS4Y1) from Homo sapiens (Human).